The following is a 457-amino-acid chain: Multidrug resistance protein MdtK (457 aa).

Over 1 to 10 (MQKYISEARL) the chain is Cytoplasmic. A helical transmembrane segment spans residues 11–31 (LLALAIPVILAQIAQTAMGFV). Residues 32 to 52 (DTVMAGGYSATDMAAVAIGTS) are Periplasmic-facing. Residues 53 to 73 (IWLPAILFGHGLLLALTPVIA) form a helical membrane-spanning segment. Residues 74-92 (QLNGSGRRERIAHQVRQGF) are Cytoplasmic-facing. A helical membrane pass occupies residues 93-113 (WLAGFVSVLIMLVLWNAGYII). The Periplasmic portion of the chain corresponds to 114-126 (RSMENIDPALADK). The chain crosses the membrane as a helical span at residues 127 to 147 (AVGYLRALLWGAPGYLFFQVA). Residues 148–159 (RNQCEGLAKTKP) lie on the Cytoplasmic side of the membrane. A helical membrane pass occupies residues 160–180 (GMVMGFIGLLVNIPVNYIFIY). The Periplasmic segment spans residues 181–191 (GHFGMPELSGV). A helical transmembrane segment spans residues 192 to 212 (GCGVATAAVYWAMFLAMVSYI). Residues 213–242 (KRARSMRDIRNEKGTAKPDPAVMKRLIQLG) are Cytoplasmic-facing. Residues 243-263 (LPIALALFFEVTLFAVVALLV) traverse the membrane as a helical segment. Residues 264–275 (SPLGIVDVAGHQ) are Periplasmic-facing. Residues 276 to 296 (IALNFSSLMFVLPMSLAAAVT) form a helical membrane-spanning segment. Topologically, residues 297–313 (IRVGYRLGQGSTLDAQT) are cytoplasmic. The helical transmembrane segment at 314–334 (AARTGLMVGVCMATLTAIFTV) threads the bilayer. The Periplasmic portion of the chain corresponds to 335-349 (SLREQIALLYNDNPE). Residues 350 to 370 (VVTLAAHLMLLAAVYQISDSI) form a helical membrane-spanning segment. The Cytoplasmic segment spans residues 371-386 (QVIGSGILRGYKDTRS). The chain crosses the membrane as a helical span at residues 387 to 407 (IFYITFTAYWVLGLPSGYILA). Residues 408–417 (LTDLVVEPMG) are Periplasmic-facing. A helical membrane pass occupies residues 418-438 (PAGFWIGFIIGLTSAAIMMML). Residues 439-457 (RMRFLQRLPSAIILQRASR) lie on the Cytoplasmic side of the membrane.

This sequence belongs to the multi antimicrobial extrusion (MATE) (TC 2.A.66.1) family. MdtK subfamily.

The protein localises to the cell inner membrane. In terms of biological role, multidrug efflux pump that functions probably as a Na(+)/drug antiporter. The protein is Multidrug resistance protein MdtK of Shigella dysenteriae serotype 1 (strain Sd197).